The primary structure comprises 396 residues: Tryptophan synthase beta chain (396 aa).

N6-(pyridoxal phosphate)lysine is present on K86.

The protein belongs to the TrpB family. In terms of assembly, tetramer of two alpha and two beta chains. The cofactor is pyridoxal 5'-phosphate.

It catalyses the reaction (1S,2R)-1-C-(indol-3-yl)glycerol 3-phosphate + L-serine = D-glyceraldehyde 3-phosphate + L-tryptophan + H2O. It functions in the pathway amino-acid biosynthesis; L-tryptophan biosynthesis; L-tryptophan from chorismate: step 5/5. Functionally, the beta subunit is responsible for the synthesis of L-tryptophan from indole and L-serine. The chain is Tryptophan synthase beta chain from Vibrio vulnificus (strain CMCP6).